The sequence spans 120 residues: Large ribosomal subunit protein uL18 (120 aa).

Belongs to the universal ribosomal protein uL18 family. In terms of assembly, part of the 50S ribosomal subunit; part of the 5S rRNA/L5/L18/L25 subcomplex. Contacts the 5S and 23S rRNAs.

Its function is as follows. This is one of the proteins that bind and probably mediate the attachment of the 5S RNA into the large ribosomal subunit, where it forms part of the central protuberance. The sequence is that of Large ribosomal subunit protein uL18 from Treponema pallidum (strain Nichols).